A 468-amino-acid polypeptide reads, in one-letter code: Glutamine synthetase (468 aa).

In terms of domain architecture, GS beta-grasp spans 11 to 96; sequence HDVKWIDLRF…LVCDIIEPST (86 aa). The GS catalytic domain maps to 104–468; the sequence is PRAIAHRAEE…PLEYELYYSC (365 aa). Positions 129 and 131 each coordinate Mg(2+). Glu-207 is an ATP binding site. Residues Glu-212 and Glu-220 each coordinate Mg(2+). L-glutamate contacts are provided by residues 264 to 265 and Gly-265; that span reads NG. His-269 lines the Mg(2+) pocket. Residues 271-273 and Ser-273 contribute to the ATP site; that span reads HMS. L-glutamate is bound by residues Arg-321, Glu-327, and Arg-339. Arg-339, Arg-344, and Arg-352 together coordinate ATP. Mg(2+) is bound at residue Glu-357. Residue Arg-359 participates in L-glutamate binding. Residue Tyr-397 is modified to O-AMP-tyrosine.

It belongs to the glutamine synthetase family. Oligomer of 12 subunits arranged in the form of two hexagons. The cofactor is Mg(2+). Mn(2+) is required as a cofactor.

It catalyses the reaction L-glutamate + NH4(+) + ATP = L-glutamine + ADP + phosphate + H(+). With respect to regulation, when cellular nitrogen levels are high, the C-terminal adenylyl transferase (AT) of GlnE inhibits GlnA by covalent transfer of an adenylyl group from ATP to Tyr-397. Conversely, when nitrogen levels are low, the N-terminal adenylyl removase (AR) of GlnE activates GlnA by removing the adenylyl group by phosphorolysis. The fully adenylated enzyme complex is inactive. Its function is as follows. Catalyzes the formation of glutamine from glutamate and ammonia. In vitro, can also use hydroxylamine, methylamine and ethylamine, with 32%, 7% and 1% activity compared to ammonia, respectively. The polypeptide is Glutamine synthetase (Pseudomonas taetrolens).